Here is a 107-residue protein sequence, read N- to C-terminus: ESAT-6-like protein EsxD (107 aa).

This sequence belongs to the WXG100 family. CFP-10 subfamily.

It localises to the secreted. In Mycobacterium tuberculosis (strain ATCC 25618 / H37Rv), this protein is ESAT-6-like protein EsxD.